A 1356-amino-acid polypeptide reads, in one-letter code: MSETNVDSLGDRNDIYSQIFGVERRPDSFATFDSDSHGDISSQLLPNRIENIQNLNVLLSEDIANDIIIAKQRRRSGVEAAIDDSDIPNNEMKGKSSNYILSQQTNIKEVPDTQSLSSADNTPVSSPKKARDATSSHPIVHAKSMSHIYSTSNSASRQAKHYNDHPLPPMSPRNEVYQKNKSTTAFVPKRKPSLPQLALAGLKKQSSFSTGSASTTPTQARKSPLQGFGFFSRPSSKDLHEQHQHHQHIQHNNINNHNNNNTNNNGAHYQVGSSNSNYPQHSHSISSRSMSLNSSTLKNIASSFQSKTSNSRKATQKYDITSNPFSDPHHHHHHHHSSNSHSSLNNVHGSGNSSSVMGSSSNIGLGLKTRVSSTSLALKRYTSVSGTSLSSPRRSSMTPLSASRPVMSASSKKPQVYPALLSRVATKFKSSIQLGEHKKDGLVYRDAFTGQQAVDVICAIIRTSDRNLALLFGRSLDAQKLFHDVVYEHRLRDSPHEVYEFTDNSRFTGTGSTNAHDPLMLLPNSSSFNSGNHSYPNSGMVPSSSTSSLNSDQATLTGSRLHMSSSLSQQKNPAAIHNVNGVFTLLAECYSPTCTRDALCYSISCPRRLEQQARLNLKPNGGLKRNISMALDDDDEEKPSWTSSVSKEDWENLPKKEIKRQEAIYEVYITEKNFVKSLEITRDTFMKTLAETNIISADIRKNFIKHVFAHINDIYSVNRRFLKALTDRQRSSPVVRGIGDIVLRFIPFFEPFVSYVASRPYAKYLIETQRSVNPYFARFDDDMMSSSLRHGIDSFLSQGVSRPGRYMLLVKEIMKSTDPEKDKSDYEDLSKAMDALRDFMKRIDQASGAAQDRHDVKLLKQKILFKNEYVNLGLNDERRKIKHEGILSRKELSKSDGTVVGDIQFYLLDNMLLFLKAKAVNKWHQHKVFQRPIPLPLLFACPGEDMPALRKYIGDHPDCSGTVIQPEYNTSNPKNAITFLYYGAKQRYQVTLYAAQYAGLQTLLEKIKQGQAAIISKTEMFNVTKMSDRFFDYTNKINSVTSCDGGRKLLIATNSGLYMSNIKRQQNKDHRHKSSAFFSTPIQLVQRNNITQIAVLEEFKSIILLIDKKLYSCPLSLIEAEGNGTSFFKKHHKELINHVSFFAEGDCNGKRLIVTAHSSSHSIKYFEHEHPLLAEKNGSGSGNKKSLKKKITEVIFDSEPVSISFLKANLCIGCKKGFQIVSISQNAHESLLDPADTSLEFALRDTLKPMAIYRVGNMFLLCYTEFAFFVNNQGWRKKESHIIHWEGEPQKFAIWYPYILAFDSNFIEIRKIETGELIRCVLADKIRLLQTSTQEILYCYEDYRGYDTVASLDFWG.

The residue at position 2 (serine 2) is an N-acetylserine. 2 disordered regions span residues arginine 74–glycine 94 and glutamate 109–glutamate 175. At serine 76 the chain carries Phosphoserine. Polar residues-rich tracts occupy residues glutamate 109 to serine 125 and histidine 147 to arginine 157. At serine 193 the chain carries Phosphoserine. Disordered regions lie at residues leucine 202 to serine 291, serine 303 to asparagine 362, serine 383 to alanine 409, glycine 531 to lysine 571, and asparagine 626 to valine 645. The span at lysine 204–arginine 221 shows a compositional bias: polar residues. Serine 223 carries the phosphoserine modification. Residues serine 235–glutamine 244 are compositionally biased toward basic and acidic residues. Positions glutamine 250–asparagine 265 are enriched in low complexity. The segment covering valine 271–histidine 281 has biased composition (polar residues). The span at serine 282–serine 291 shows a compositional bias: low complexity. Residues serine 303–phenylalanine 325 are compositionally biased toward polar residues. Residues histidine 329 to serine 338 are compositionally biased toward basic residues. Low complexity-rich tracts occupy residues asparagine 339–asparagine 362 and serine 383–serine 401. 2 positions are modified to phosphoserine: serine 566 and serine 628. Residues lysine 659 to alanine 846 form the DH domain. The region spanning threonine 1034–isoleucine 1336 is the CNH domain.

In terms of biological role, stimulates the exchange of RHO1 GDP-bound form into GTP-bound form. This is RHO1 GDP-GTP exchange protein 2 (ROM2) from Saccharomyces cerevisiae (strain ATCC 204508 / S288c) (Baker's yeast).